A 126-amino-acid chain; its full sequence is Small ribosomal subunit protein uS11 (126 aa).

The protein belongs to the universal ribosomal protein uS11 family. In terms of assembly, part of the 30S ribosomal subunit. Interacts with proteins S7 and S18. Binds to IF-3.

Its function is as follows. Located on the platform of the 30S subunit, it bridges several disparate RNA helices of the 16S rRNA. Forms part of the Shine-Dalgarno cleft in the 70S ribosome. The polypeptide is Small ribosomal subunit protein uS11 (Desulfotalea psychrophila (strain LSv54 / DSM 12343)).